We begin with the raw amino-acid sequence, 228 residues long: Lipoprotein-releasing system ATP-binding protein LolD (228 aa).

The ABC transporter domain maps to 6–225 (LEAKDVYKHF…ILHMQDGLWV (220 aa)). 42–49 (GASGSGKS) is a binding site for ATP.

The protein belongs to the ABC transporter superfamily. Lipoprotein translocase (TC 3.A.1.125) family. In terms of assembly, the complex is composed of two ATP-binding proteins (LolD) and two transmembrane proteins (LolC and LolE).

It localises to the cell inner membrane. Part of the ABC transporter complex LolCDE involved in the translocation of mature outer membrane-directed lipoproteins, from the inner membrane to the periplasmic chaperone, LolA. Responsible for the formation of the LolA-lipoprotein complex in an ATP-dependent manner. This Acinetobacter baylyi (strain ATCC 33305 / BD413 / ADP1) protein is Lipoprotein-releasing system ATP-binding protein LolD.